The sequence spans 307 residues: Cilia-and flagella-associated protein 96 (307 aa).

Disordered regions lie at residues 73-102 (YSDP…SSGE) and 218-279 (HSQK…GPKT).

This sequence belongs to the CFAP96 family.

It localises to the cytoplasm. Its subcellular location is the cytoskeleton. The protein localises to the microtubule organizing center. It is found in the centrosome. This is Cilia-and flagella-associated protein 96 (cfap96.L) from Xenopus laevis (African clawed frog).